The following is a 35-amino-acid chain: Photosystem II reaction center protein T (35 aa).

A helical transmembrane segment spans residues 3-23; it reads ALVYTFLLVSTLGIIFFAIFF.

It belongs to the PsbT family. PSII is composed of 1 copy each of membrane proteins PsbA, PsbB, PsbC, PsbD, PsbE, PsbF, PsbH, PsbI, PsbJ, PsbK, PsbL, PsbM, PsbT, PsbY, PsbZ, Psb30/Ycf12, at least 3 peripheral proteins of the oxygen-evolving complex and a large number of cofactors. It forms dimeric complexes.

It is found in the plastid. The protein localises to the chloroplast thylakoid membrane. In terms of biological role, found at the monomer-monomer interface of the photosystem II (PS II) dimer, plays a role in assembly and dimerization of PSII. PSII is a light-driven water plastoquinone oxidoreductase, using light energy to abstract electrons from H(2)O, generating a proton gradient subsequently used for ATP formation. This chain is Photosystem II reaction center protein T, found in Stewartia pseudocamellia (Japanese stewartia).